The following is a 151-amino-acid chain: NPC intracellular cholesterol transporter 2 (151 aa).

Positions 1-19 (MRFLAATFLLLALSTAAQA) are cleaved as a signal peptide. Intrachain disulfides connect cysteine 27-cysteine 140, cysteine 42-cysteine 47, and cysteine 93-cysteine 99. Asparagine 58 carries an N-linked (GlcNAc...) asparagine glycan. An N6-acetyllysine modification is found at lysine 116. Asparagine 135 is a glycosylation site (N-linked (GlcNAc...) asparagine).

Belongs to the NPC2 family. As to quaternary structure, interacts with NPC1 (via the second lumenal domain) in a cholestrol-dependent manner. Interacts with NUS1/NgBR, the interaction stabilizes NCP2 and regulates cholesterol trafficking. Interacts with DHDDS. Interacts with NEDD4L (via C2 domain). Interacts with NPC1L1. In terms of tissue distribution, detected in gallbladder bile. Detected in fibroblasts, kidney, liver, spleen, small intestine, placenta and testis (at protein level). Epididymis.

Its subcellular location is the secreted. The protein localises to the endoplasmic reticulum. It localises to the lysosome. The catalysed reaction is cholesterol(in) = cholesterol(out). Functionally, intracellular cholesterol transporter which acts in concert with NPC1 and plays an important role in the egress of cholesterol from the lysosomal compartment. Unesterified cholesterol that has been released from LDLs in the lumen of the late endosomes/lysosomes is transferred by NPC2 to the cholesterol-binding pocket in the N-terminal domain of NPC1. May bind and mobilize cholesterol that is associated with membranes. NPC2 binds cholesterol with a 1:1 stoichiometry. Can bind a variety of sterols, including lathosterol, desmosterol and the plant sterols stigmasterol and beta-sitosterol. The secreted form of NCP2 regulates biliary cholesterol secretion via stimulation of ABCG5/ABCG8-mediated cholesterol transport. In Homo sapiens (Human), this protein is NPC intracellular cholesterol transporter 2.